A 244-amino-acid polypeptide reads, in one-letter code: Myosin-7 (244 aa).

The interval 1 to 244 (VEQTERSRKL…DIGTKGLNEE (244 aa)) is rodlike tail (S2 and LMM domains). A coiled-coil region spans residues 1–244 (VEQTERSRKL…DIGTKGLNEE (244 aa)). The disordered stretch occupies residues 216-244 (EERADIAESQVNKLRAKSRDIGTKGLNEE). A compositionally biased stretch (basic and acidic residues) spans 232–244 (KSRDIGTKGLNEE).

Muscle myosin is a hexameric protein that consists of 2 heavy chain subunits (MHC), 2 alkali light chain subunits (MLC) and 2 regulatory light chain subunits (MLC-2). Interacts with ECPAS. Interacts (via C-terminus) with LRRC39.

It is found in the cytoplasm. It localises to the myofibril. The protein localises to the sarcomere. In terms of biological role, myosins are actin-based motor molecules with ATPase activity essential for muscle contraction. Forms regular bipolar thick filaments that, together with actin thin filaments, constitute the fundamental contractile unit of skeletal and cardiac muscle. The protein is Myosin-7 (MYH7) of Papio hamadryas (Hamadryas baboon).